The sequence spans 171 residues: Sec-independent protein translocase protein TatB (171 aa).

The helical transmembrane segment at 2-22 threads the bilayer; the sequence is FDGIGFMELLLIGVLGLVVLG. Residues 69 to 171 are disordered; that stretch reads SKGLSNLSPE…DTRSNPKANG (103 aa). Polar residues predominate over residues 88-97; sequence QAAQSVNRPY. Low complexity-rich tracts occupy residues 114 to 130 and 138 to 158; these read HSPV…HTSP and PTAT…SEPS. A compositionally biased stretch (polar residues) spans 160–171; the sequence is GADTRSNPKANG.

This sequence belongs to the TatB family. As to quaternary structure, the Tat system comprises two distinct complexes: a TatABC complex, containing multiple copies of TatA, TatB and TatC subunits, and a separate TatA complex, containing only TatA subunits. Substrates initially bind to the TatABC complex, which probably triggers association of the separate TatA complex to form the active translocon.

The protein localises to the cell inner membrane. Part of the twin-arginine translocation (Tat) system that transports large folded proteins containing a characteristic twin-arginine motif in their signal peptide across membranes. Together with TatC, TatB is part of a receptor directly interacting with Tat signal peptides. TatB may form an oligomeric binding site that transiently accommodates folded Tat precursor proteins before their translocation. The polypeptide is Sec-independent protein translocase protein TatB (Shewanella baltica (strain OS185)).